Consider the following 338-residue polypeptide: Large ribosomal subunit protein uL10 (338 aa).

Residues 292 to 338 (LDDDLKERVSSTASAVEAKEEEAPKEEKEEEKEEEEEAPAAGLGMLF) are disordered. The span at 308–318 (EAKEEEAPKEE) shows a compositional bias: basic and acidic residues. Positions 319 to 329 (KEEEKEEEEEA) are enriched in acidic residues.

Belongs to the universal ribosomal protein uL10 family. In terms of assembly, part of the 50S ribosomal subunit. Forms part of the ribosomal stalk which helps the ribosome interact with GTP-bound translation factors. Forms a heptameric L10(L12)2(L12)2(L12)2 complex, where L10 forms an elongated spine to which the L12 dimers bind in a sequential fashion.

Functionally, forms part of the ribosomal stalk, playing a central role in the interaction of the ribosome with GTP-bound translation factors. The chain is Large ribosomal subunit protein uL10 from Methanococcus aeolicus (strain ATCC BAA-1280 / DSM 17508 / OCM 812 / Nankai-3).